Here is a 50-residue protein sequence, read N- to C-terminus: Defensin D4 (50 aa).

Cystine bridges form between Cys-3/Cys-50, Cys-14/Cys-35, Cys-20/Cys-44, and Cys-24/Cys-46.

Detected in seeds (at protein level).

The protein localises to the secreted. Functionally, antimicrobial peptide with antifungal activity. The sequence is that of Defensin D4 from Nigella sativa (Black cumin).